The chain runs to 433 residues: Enolase (433 aa).

Residue Gln-167 participates in (2R)-2-phosphoglycerate binding. Glu-209 serves as the catalytic Proton donor. Mg(2+) is bound by residues Asp-246, Glu-291, and Asp-318. Residues Lys-343, Arg-372, Ser-373, and Lys-394 each contribute to the (2R)-2-phosphoglycerate site. The active-site Proton acceptor is the Lys-343.

This sequence belongs to the enolase family. In terms of assembly, component of the RNA degradosome, a multiprotein complex involved in RNA processing and mRNA degradation. It depends on Mg(2+) as a cofactor.

The protein resides in the cytoplasm. It is found in the secreted. The protein localises to the cell surface. It catalyses the reaction (2R)-2-phosphoglycerate = phosphoenolpyruvate + H2O. The protein operates within carbohydrate degradation; glycolysis; pyruvate from D-glyceraldehyde 3-phosphate: step 4/5. Its function is as follows. Catalyzes the reversible conversion of 2-phosphoglycerate (2-PG) into phosphoenolpyruvate (PEP). It is essential for the degradation of carbohydrates via glycolysis. The protein is Enolase of Pasteurella multocida (strain Pm70).